The primary structure comprises 103 residues: Small ribosomal subunit protein uS10 (103 aa).

It belongs to the universal ribosomal protein uS10 family. Part of the 30S ribosomal subunit.

Involved in the binding of tRNA to the ribosomes. In Aliivibrio fischeri (strain ATCC 700601 / ES114) (Vibrio fischeri), this protein is Small ribosomal subunit protein uS10.